We begin with the raw amino-acid sequence, 237 residues long: 1-(5-phosphoribosyl)-5-[(5-phosphoribosylamino)methylideneamino] imidazole-4-carboxamide isomerase (237 aa).

Residue aspartate 8 is the Proton acceptor of the active site. The active-site Proton donor is aspartate 129.

Belongs to the HisA/HisF family.

It localises to the cytoplasm. The enzyme catalyses 1-(5-phospho-beta-D-ribosyl)-5-[(5-phospho-beta-D-ribosylamino)methylideneamino]imidazole-4-carboxamide = 5-[(5-phospho-1-deoxy-D-ribulos-1-ylimino)methylamino]-1-(5-phospho-beta-D-ribosyl)imidazole-4-carboxamide. The protein operates within amino-acid biosynthesis; L-histidine biosynthesis; L-histidine from 5-phospho-alpha-D-ribose 1-diphosphate: step 4/9. The polypeptide is 1-(5-phosphoribosyl)-5-[(5-phosphoribosylamino)methylideneamino] imidazole-4-carboxamide isomerase (Roseiflexus castenholzii (strain DSM 13941 / HLO8)).